The primary structure comprises 618 residues: MALPIDPMEEPRMYQQTLLQDGLYDLLESDMMVDCVLKIKDKEFPCHRLVLAACSSYFRAFFKSGVEESKQREIVLEDVEPGVMGIILKYLYTSNINVTEQNVQDIFALSNMLQIPSIFTVCVSFLQKRLSLSNCLAIFRLGLMLDCPRLAISARNFACERFQFITRDEEFLQLTPSELAAVLASDSLNVETEQDVFEALIKWVGHDQENRIGDLPDLLDCIRLRLVPRDYFVKNVEKHEWLSSNPEITKKLQLVKDAHAGKLPELKKTKNKKSPSEEGQKKGDEEEVEEEEEQEERLPGILNDNLRFGMFLRELIFLINDSASVAYDPTGNDCYVASVSTQIPKNHCSLVTKENQIFVAGGLFFDEQSKDEQIYSYFLQFDPASSDWMGMPPIPSPRFLFGMGEAENFIFVIGGREMKEGENILNTVMVYDRQFLKWAESDPLPYLVYGHGVVSHNEMIYVIGGKGENKECLNRVCAYDIKTHQWKDLAPLNTARSLFGVTIHKNNIYVVAGVTDSGLTGSAEVYDIKTNKWSEFVEFPQDRSSLSLVSVSGVLYAVGGFAMFPKEDSDDLMPLEMNDIWRYDESERTWSGILRENRYASGATVLGVRLNTLRLTKM.

One can recognise a BTB domain in the interval 33-100; that stretch reads VDCVLKIKDK…LYTSNINVTE (68 aa). The 103-residue stretch at 135 to 237 folds into the BACK domain; the sequence is CLAIFRLGLM…PRDYFVKNVE (103 aa). A compositionally biased stretch (basic and acidic residues) spans 264–284; the sequence is PELKKTKNKKSPSEEGQKKGD. The disordered stretch occupies residues 264–297; that stretch reads PELKKTKNKKSPSEEGQKKGDEEEVEEEEEQEER. The span at 285–295 shows a compositional bias: acidic residues; it reads EEEVEEEEEQE. Kelch repeat units lie at residues 356-408, 409-458, 459-506, 508-553, and 555-608; these read QIFV…EAEN, FIFV…SHNE, MIYV…IHKN, IYVV…SVSG, and LYAV…VLGV.

The protein belongs to the KLHL40 family. In terms of assembly, component of the BCR(KLHL40) E3 ubiquitin ligase complex. In terms of tissue distribution, expressed in skeletal muscle. Detected in the eye at much lower levels.

It localises to the cytoplasm. Its subcellular location is the myofibril. The protein resides in the sarcomere. It is found in the a band. The protein localises to the i band. Functionally, substrate-specific adapter of a BCR (BTB-CUL3-RBX1) E3 ubiquitin ligase complex. Required for skeletal muscle development. In Danio rerio (Zebrafish), this protein is Kelch-like protein 40b (klhl40b).